A 151-amino-acid polypeptide reads, in one-letter code: 3-hydroxyacyl-[acyl-carrier-protein] dehydratase FabZ (151 aa).

His-49 is an active-site residue.

Belongs to the thioester dehydratase family. FabZ subfamily.

It is found in the cytoplasm. The catalysed reaction is a (3R)-hydroxyacyl-[ACP] = a (2E)-enoyl-[ACP] + H2O. Its function is as follows. Involved in unsaturated fatty acids biosynthesis. Catalyzes the dehydration of short chain beta-hydroxyacyl-ACPs and long chain saturated and unsaturated beta-hydroxyacyl-ACPs. This is 3-hydroxyacyl-[acyl-carrier-protein] dehydratase FabZ from Wolinella succinogenes (strain ATCC 29543 / DSM 1740 / CCUG 13145 / JCM 31913 / LMG 7466 / NCTC 11488 / FDC 602W) (Vibrio succinogenes).